The primary structure comprises 395 residues: Protein UNIFOLIATA (395 aa).

Disordered regions lie at residues 147 to 170 (SQEG…GGGS) and 185 to 223 (QIRR…GERQ). Residues 202–211 (EEGEEEEEDN) are compositionally biased toward acidic residues. DNA-binding regions lie at residues 224–228 (REHPF), 293–300 (NKPKMRHY), and 364–367 (YGPT).

It belongs to the FLO/LFY family. In terms of tissue distribution, highly expressed in leaf, leaflet, inflorescence and lateral shoot primordia on the main shoot axis, and in floral organ and carpel primordia.

The protein localises to the nucleus. Functionally, may regulate indeterminacy during leaf and flower development. In Pisum sativum (Garden pea), this protein is Protein UNIFOLIATA (UNI).